Consider the following 326-residue polypeptide: Glutaredoxin 3 (326 aa).

A Thioredoxin domain is found at 1–108 (MANFTDAASL…LTNKVQRLGS (108 aa)). Glutaredoxin domains lie at 125–227 (NQRL…VSLE) and 227–326 (ENRL…KGEN). [2Fe-2S] cluster is bound by residues C150 and C252.

As to quaternary structure, homodimer; the homodimer is independent of 2Fe-2S clusters. Heterotrimer; forms a heterotrimeric complex composed by two bola2 molecules and one glrx3 molecule; linked by [2Fe-2S] clusters.

It localises to the cytoplasm. The protein localises to the cytosol. Functionally, together with bola2, acts as a cytosolic iron-sulfur (Fe-S) cluster assembly factor that facilitates [2Fe-2S] cluster insertion into a subset of cytosolic proteins. Required for hemoglobin maturation. Does not possess any thyoredoxin activity since it lacks the conserved motif that is essential for catalytic activity. The protein is Glutaredoxin 3 (glrx3) of Danio rerio (Zebrafish).